The chain runs to 420 residues: DNA repair protein NreA (420 aa).

The short motif at Gln-413–Ala-420 is the PIP motif element.

Belongs to the Nre family. Interacts with the DNA polymerase sliding clamp (PCNA) via the PIP (PCNA-interacting peptide) motif.

In terms of biological role, involved in DNA damage repair. Works together with the UvrABC proteins in repairing DNA damage resulting from exposure to the DNA damaging agent mitomycin C (MMC). This chain is DNA repair protein NreA, found in Haloferax volcanii (strain ATCC 29605 / DSM 3757 / JCM 8879 / NBRC 14742 / NCIMB 2012 / VKM B-1768 / DS2) (Halobacterium volcanii).